The primary structure comprises 638 residues: Chaperone protein DnaK (638 aa).

Thr198 bears the Phosphothreonine; by autocatalysis mark. The disordered stretch occupies residues 600 to 638 (KTQTEGGAQPGAEADGDTGAKGGEKVVDADFEEVKDDKK). Residues 628–638 (ADFEEVKDDKK) are compositionally biased toward acidic residues.

Belongs to the heat shock protein 70 family.

Acts as a chaperone. This chain is Chaperone protein DnaK, found in Geobacter metallireducens (strain ATCC 53774 / DSM 7210 / GS-15).